The sequence spans 60 residues: Cytotoxin 1 (60 aa).

4 cysteine pairs are disulfide-bonded: C3–C21, C14–C38, C42–C53, and C54–C59.

This sequence belongs to the three-finger toxin family. Short-chain subfamily. Type IA cytotoxin sub-subfamily. In terms of assembly, monomer in solution; Homodimer and oligomer in the presence of negatively charged lipids forming a pore with a size ranging between 20 and 30 angstroms. Expressed by the venom gland.

It localises to the secreted. Its subcellular location is the target cell membrane. In terms of biological role, basic protein that binds to cell membrane and depolarizes cardiomyocytes. This cytotoxin also possesses lytic activity on many other cells, including red blood cells. Interaction with sulfatides in the cell membrane induces pore formation and cell internalization and is responsible for cytotoxicity in cardiomyocytes. It targets the mitochondrial membrane and induces mitochondrial swelling and fragmentation. Inhibits protein kinases C. It binds to the integrin alpha-V/beta-3 with a moderate affinity. This is Cytotoxin 1 from Naja pallida (Red spitting cobra).